A 230-amino-acid polypeptide reads, in one-letter code: Large ribosomal subunit protein uL1 (230 aa).

This sequence belongs to the universal ribosomal protein uL1 family. As to quaternary structure, part of the 50S ribosomal subunit.

Its function is as follows. Binds directly to 23S rRNA. The L1 stalk is quite mobile in the ribosome, and is involved in E site tRNA release. Functionally, protein L1 is also a translational repressor protein, it controls the translation of the L11 operon by binding to its mRNA. This chain is Large ribosomal subunit protein uL1, found in Sulfurimonas denitrificans (strain ATCC 33889 / DSM 1251) (Thiomicrospira denitrificans (strain ATCC 33889 / DSM 1251)).